The chain runs to 409 residues: LL-diaminopimelate aminotransferase (409 aa).

Positions 15 and 42 each coordinate substrate. Residues Tyr72, 108 to 109, Tyr132, Asn186, Tyr217, and 245 to 247 each bind pyridoxal 5'-phosphate; these read AK and SFS. Lys109, Tyr132, and Asn186 together coordinate substrate. Lys248 is modified (N6-(pyridoxal phosphate)lysine). 2 residues coordinate pyridoxal 5'-phosphate: Arg256 and Asn291. Substrate is bound by residues Asn291 and Arg387.

Belongs to the class-I pyridoxal-phosphate-dependent aminotransferase family. LL-diaminopimelate aminotransferase subfamily. In terms of assembly, homodimer. Pyridoxal 5'-phosphate is required as a cofactor.

The enzyme catalyses (2S,6S)-2,6-diaminopimelate + 2-oxoglutarate = (S)-2,3,4,5-tetrahydrodipicolinate + L-glutamate + H2O + H(+). It functions in the pathway amino-acid biosynthesis; L-lysine biosynthesis via DAP pathway; LL-2,6-diaminopimelate from (S)-tetrahydrodipicolinate (aminotransferase route): step 1/1. Functionally, involved in the synthesis of meso-diaminopimelate (m-DAP or DL-DAP), required for both lysine and peptidoglycan biosynthesis. Catalyzes the direct conversion of tetrahydrodipicolinate to LL-diaminopimelate. The sequence is that of LL-diaminopimelate aminotransferase from Phocaeicola vulgatus (strain ATCC 8482 / DSM 1447 / JCM 5826 / CCUG 4940 / NBRC 14291 / NCTC 11154) (Bacteroides vulgatus).